Here is a 1934-residue protein sequence, read N- to C-terminus: Myosin-7 (1934 aa).

The region spanning 31-80 (DLKKDVFVPDDKEEFVKAKIVSREGGKVTAETENGKTVTVKEDQVMQQNP) is the Myosin N-terminal SH3-like domain. Positions 84–777 (DKIEDMAMLT…LLGLLEEMRD (694 aa)) constitute a Myosin motor domain. The residue at position 128 (lysine 128) is an N6,N6,N6-trimethyllysine. 177-184 (GESGAGKT) is an ATP binding site. Threonine 377 is modified (phosphothreonine). Actin-binding stretches follow at residues 654 to 676 (LNKL…IPNE) and 756 to 770 (KFGH…GLLG). The IQ domain occupies 780 to 809 (LSRIITRIQAQSRGLLSRMEFKKLLERRDS). Residues 839–1934 (LKSAETEKEM…DIGAKGLNEE (1096 aa)) adopt a coiled-coil conformation. Residues serine 1136 and serine 1268 each carry the phosphoserine modification. Phosphothreonine is present on threonine 1281. Residue tyrosine 1307 is modified to Phosphotyrosine. Threonine 1308 is modified (phosphothreonine). Serine 1509 carries the post-translational modification Phosphoserine. Position 1512 is a phosphothreonine (threonine 1512). The disordered stretch occupies residues 1914–1934 (SQVNKLRAKSRDIGAKGLNEE). Basic and acidic residues predominate over residues 1922–1934 (KSRDIGAKGLNEE).

This sequence belongs to the TRAFAC class myosin-kinesin ATPase superfamily. Myosin family. In terms of assembly, muscle myosin is a hexameric protein that consists of 2 heavy chain subunits (MHC), 2 alkali light chain subunits (MLC) and 2 regulatory light chain subunits (MLC-2). Interacts with ECPAS. Interacts (via C-terminus) with LRRC39.

Its subcellular location is the cytoplasm. The protein localises to the myofibril. It localises to the sarcomere. Functionally, myosins are actin-based motor molecules with ATPase activity essential for muscle contraction. Forms regular bipolar thick filaments that, together with actin thin filaments, constitute the fundamental contractile unit of skeletal and cardiac muscle. In Mesocricetus auratus (Golden hamster), this protein is Myosin-7 (MYH7).